The chain runs to 418 residues: UDP-N-acetylglucosamine 1-carboxyvinyltransferase (418 aa).

22 to 23 (KN) contacts phosphoenolpyruvate. Arg92 lines the UDP-N-acetyl-alpha-D-glucosamine pocket. Residue Cys116 is the Proton donor of the active site. The residue at position 116 (Cys116) is a 2-(S-cysteinyl)pyruvic acid O-phosphothioketal. Residues 121 to 125 (RPIDL), Asp305, and Leu327 contribute to the UDP-N-acetyl-alpha-D-glucosamine site.

It belongs to the EPSP synthase family. MurA subfamily.

Its subcellular location is the cytoplasm. The enzyme catalyses phosphoenolpyruvate + UDP-N-acetyl-alpha-D-glucosamine = UDP-N-acetyl-3-O-(1-carboxyvinyl)-alpha-D-glucosamine + phosphate. Its pathway is cell wall biogenesis; peptidoglycan biosynthesis. Cell wall formation. Adds enolpyruvyl to UDP-N-acetylglucosamine. This Campylobacter jejuni (strain RM1221) protein is UDP-N-acetylglucosamine 1-carboxyvinyltransferase.